Here is a 495-residue protein sequence, read N- to C-terminus: Solute carrier family 2, facilitated glucose transporter member 3 (495 aa).

Residues 1-10 lie on the Cytoplasmic side of the membrane; the sequence is MGTQKVTVSL. Residues 11–32 traverse the membrane as a helical segment; sequence IFALSIATIGSFQFGYNTGVIN. The Extracellular portion of the chain corresponds to 33 to 64; the sequence is APETIIKDFLNYTLEEKSENLPTEVLLTSLWS. Asparagine 43 carries N-linked (GlcNAc...) asparagine glycosylation. Residues 65-85 traverse the membrane as a helical segment; that stretch reads LSVAIFSVGGMIGSFSVGLFV. The Cytoplasmic portion of the chain corresponds to 86-90; the sequence is NRFGR. A helical transmembrane segment spans residues 91-111; the sequence is RNSMLMVNLLAVAGGCLMGFC. Over 112–118 the chain is Extracellular; the sequence is KIAQSVE. A helical transmembrane segment spans residues 119-142; the sequence is MLILGRLIIGLFCGLCTGFVPMYI. At 143 to 153 the chain is on the cytoplasmic side; it reads GEISPTALRGA. The helical transmembrane segment at 154–174 threads the bilayer; the sequence is FGTLNQLGIVIGILVAQIFGL. A D-glucose-binding site is contributed by glutamine 159. Topologically, residues 175–183 are extracellular; it reads KVIMGTEEL. A helical transmembrane segment spans residues 184–204; sequence WPLLLGFTIIPAVLQSAALPF. Topologically, residues 205–269 are cytoplasmic; that stretch reads CPESPRFLLI…LFRSRSYRQP (65 aa). Threonine 232 is subject to Phosphothreonine. A helical transmembrane segment spans residues 270–290; the sequence is IIISIMLQLSQQLSGINAVFY. The tract at residues 277-279 is important for selectivity against fructose; sequence QLS. Residues 280–281 and asparagine 286 contribute to the D-glucose site; that span reads QQ. Topologically, residues 291–304 are extracellular; the sequence is YSTGIFKDAGVEEP. The helical transmembrane segment at 305–325 threads the bilayer; that stretch reads IYATIGAGVVNTIFTVVSLFL. Position 315 (asparagine 315) interacts with D-glucose. Residues 326 to 331 lie on the Cytoplasmic side of the membrane; it reads VERAGR. A helical membrane pass occupies residues 332–352; it reads RTLHMIGLGGMAVCSILMTIS. Over 353–363 the chain is Extracellular; sequence LLLKDNYNWMS. The helical transmembrane segment at 364–389 threads the bilayer; sequence FVCIGAILVFVAFFEIGPGPIPWFIV. Residues glutamate 378 and tryptophan 386 each coordinate D-glucose. Over 390–399 the chain is Cytoplasmic; that stretch reads AELFSQGPRP. The helical transmembrane segment at 400 to 420 threads the bilayer; it reads AAMAVAGCSNWTSNFLVGLLF. Residues 421–429 are Extracellular-facing; it reads PSAAFYLGA. Residues 430–450 traverse the membrane as a helical segment; sequence YVFIIFTGFLIVFLVFTFFKV. The Cytoplasmic segment spans residues 451-495; sequence PETRGRTFEEITRAFEGQGQDANRAEKGPIVEMNSMQPVKETATV. The residue at position 485 (serine 485) is a Phosphoserine. Phosphothreonine is present on threonine 492.

It belongs to the major facilitator superfamily. Sugar transporter (TC 2.A.1.1) family. Glucose transporter subfamily. Interacts with SMIM43; the interaction may promote SLC2A3-mediated glucose transport to meet the energy needs of mesendoderm differentiation.

The protein resides in the cell membrane. It localises to the perikaryon. It is found in the cell projection. It catalyses the reaction D-glucose(out) = D-glucose(in). The catalysed reaction is D-galactose(in) = D-galactose(out). With respect to regulation, deoxyglucose transport is inhibited by D-glucose, D-galactose and maltose. Galactose transport is inhibited by D-glucose and maltose. Its function is as follows. Facilitative glucose transporter. Can also mediate the uptake of various other monosaccharides across the cell membrane. Mediates the uptake of glucose, 2-deoxyglucose, galactose, mannose, xylose and fucose, and probably also dehydroascorbate. Does not mediate fructose transport. Required for mesendoderm differentiation. The chain is Solute carrier family 2, facilitated glucose transporter member 3 from Canis lupus familiaris (Dog).